The following is a 362-amino-acid chain: Talin rod domain-containing protein 1 (362 aa).

A disordered region spans residues Met1–Ser26. Ala2 bears the N-acetylalanine mark. The segment covering Ala13–Ser26 has biased composition (low complexity).

May homodimerize. Interacts with F-actin.

Its function is as follows. Actin-binding protein which may have an oncogenic function and regulates cell proliferation, migration and invasion in cancer cells. This Homo sapiens (Human) protein is Talin rod domain-containing protein 1.